Consider the following 137-residue polypeptide: Basic phospholipase A2 homolog 2 (137 aa).

The signal sequence occupies residues 1–16; that stretch reads MRTLWIMAVLLVGVEG. 7 disulfide bridges follow: cysteine 42–cysteine 131, cysteine 44–cysteine 60, cysteine 59–cysteine 111, cysteine 65–cysteine 137, cysteine 66–cysteine 104, cysteine 73–cysteine 97, and cysteine 91–cysteine 102. Residues 121–133 are important for membrane-damaging activities in eukaryotes and bacteria; heparin-binding; sequence KKYRYYLKPLCKK.

It belongs to the phospholipase A2 family. Group II subfamily. K49 sub-subfamily. In terms of assembly, homodimer; non-covalently linked. Binds to heparin. Post-translationally, it binds long-chain fatty acids covalently by a rapid, spontaneous, and autocatalytic process. When acylated, it binds to the surface of liposomes and isolated muscle membranes, with the fatty acid moiety inserted into the lipid bilayer and possibly acting as an anchor. Expressed by the venom gland.

The protein resides in the secreted. Heparin inhibits the myotoxic activity. Suramin inhibits the myotoxic activity. High level of membrane cholesterol content reduces cytolytic activity, whereas low level of membrane cholesterol content increases cytolytic activity. In terms of biological role, snake venom phospholipase A2 homolog that lacks enzymatic activity. Is myotoxic and induces a dose-dependent edema in the mouse foot pad. Also exhibits strong anticoagulant effects by binding to factor Xa (F10) and inhibiting the prothrombinase activity (IC(50) is 3 nM). In addition, it shows cytotoxic activity to a variety of cell types and bactericidal activity to a variety of Gram-negative and Gram-positive bacteria. Also induces a very rapid release of large amounts of potassium ions and ATP from muscle cells, which accounts for the pain reaction characteristic of viperid envenomations. The released ATP amplifies the effect of the myotoxins, acting as a 'danger signal', which spreads and causes further damage by acting on purinergic receptors. A model of myotoxic mechanism has been proposed: an apo Lys49-PLA2 is activated by the entrance of a hydrophobic molecule (e.g. fatty acid) at the hydrophobic channel of the protein leading to a reorientation of a monomer. This reorientation causes a transition between 'inactive' to 'active' states, causing alignment of C-terminal and membrane-docking sites (MDoS) side-by-side and putting the membrane-disruption sites (MDiS) in the same plane, exposed to solvent and in a symmetric position for both monomers. The MDoS region stabilizes the toxin on membrane by the interaction of charged residues with phospholipid head groups. Subsequently, the MDiS region destabilizes the membrane with penetration of hydrophobic residues. This insertion causes a disorganization of the membrane, allowing an uncontrolled influx of ions (i.e. calcium and sodium), and eventually triggering irreversible intracellular alterations and cell death. The polypeptide is Basic phospholipase A2 homolog 2 (Bothrops asper (Terciopelo)).